The primary structure comprises 463 residues: MALGVREYRNISEIKGPLLVVEGVSRVAYDEIVEVETAAGEKRRGRVLEVGMGYAVVQVFEGTTGISPTGTVVRFMGRPLEIPVTEDMLGRIMNGLGEPIDGGPKIDADERRDVNGAPLNPAERAYPEDFIQTGVSAIDGMNTLVRGQKLPIFSGAGLPHNRLAAQIARQATVRGEEEEFAVVFSAIGIKYDDFLFFKKFFEETGALGRVAMFVNLADEPAMIRLITPRAALTLAEYLAYERDMHVLVIITDMTNYAEALREISAAREEVPGRQGYPGYLYSDLASIYERAGRVKGKKGSITQMPILTMPNDDITHPIPDLTGYITEGQIVLSRELHNRGIYPPINVLMSLSRLMKEGIGPGKTREDHAEVSNQLYASYSRGVELRSLTAVVGEESLSERDRRYLKFADLFEQRFLKQGERENRSIEETLDIAWEILSVLPEEELVNIKEETIKKYHPKYRAG.

It belongs to the ATPase alpha/beta chains family. In terms of assembly, has multiple subunits with at least A(3), B(3), C, D, E, F, H, I and proteolipid K(x).

The protein localises to the cell membrane. In terms of biological role, component of the A-type ATP synthase that produces ATP from ADP in the presence of a proton gradient across the membrane. The B chain is a regulatory subunit. The sequence is that of A-type ATP synthase subunit B from Aeropyrum pernix (strain ATCC 700893 / DSM 11879 / JCM 9820 / NBRC 100138 / K1).